A 364-amino-acid chain; its full sequence is Uroporphyrinogen decarboxylase (364 aa).

Residues R34, A36, R38, R47, D83, Y161, S216, and H336 each coordinate coproporphyrinogen I. Coproporphyrinogen III-binding residues include R34, A36, and R38. D83, Y161, S216, and H336 together coordinate coproporphyrinogen III.

The protein belongs to the uroporphyrinogen decarboxylase family. In terms of assembly, homodimer.

It is found in the cytoplasm. It localises to the cytosol. The enzyme catalyses uroporphyrinogen III + 4 H(+) = coproporphyrinogen III + 4 CO2. The catalysed reaction is uroporphyrinogen I + 4 H(+) = coproporphyrinogen I + 4 CO2. It functions in the pathway porphyrin-containing compound metabolism; protoporphyrin-IX biosynthesis; coproporphyrinogen-III from 5-aminolevulinate: step 4/4. Catalyzes the sequential decarboxylation of the four acetate side chains of uroporphyrinogen to form coproporphyrinogen and participates in the fifth step in the heme biosynthetic pathway. Isomer I or isomer III of uroporphyrinogen may serve as substrate, but only coproporphyrinogen III can ultimately be converted to heme. In vitro also decarboxylates pentacarboxylate porphyrinogen I. The sequence is that of Uroporphyrinogen decarboxylase from Rattus norvegicus (Rat).